Here is a 429-residue protein sequence, read N- to C-terminus: 3-phosphoshikimate 1-carboxyvinyltransferase (429 aa).

Residues lysine 23, serine 24, and arginine 28 each contribute to the 3-phosphoshikimate site. Lysine 23 contributes to the phosphoenolpyruvate binding site. Residues glycine 95 and arginine 123 each contribute to the phosphoenolpyruvate site. Residues serine 168, glutamine 170, aspartate 316, and lysine 343 each coordinate 3-phosphoshikimate. Phosphoenolpyruvate is bound at residue glutamine 170. Residue aspartate 316 is the Proton acceptor of the active site. 2 residues coordinate phosphoenolpyruvate: arginine 347 and arginine 389.

This sequence belongs to the EPSP synthase family. Monomer.

It localises to the cytoplasm. It carries out the reaction 3-phosphoshikimate + phosphoenolpyruvate = 5-O-(1-carboxyvinyl)-3-phosphoshikimate + phosphate. Its pathway is metabolic intermediate biosynthesis; chorismate biosynthesis; chorismate from D-erythrose 4-phosphate and phosphoenolpyruvate: step 6/7. Catalyzes the transfer of the enolpyruvyl moiety of phosphoenolpyruvate (PEP) to the 5-hydroxyl of shikimate-3-phosphate (S3P) to produce enolpyruvyl shikimate-3-phosphate and inorganic phosphate. This chain is 3-phosphoshikimate 1-carboxyvinyltransferase, found in Oceanobacillus iheyensis (strain DSM 14371 / CIP 107618 / JCM 11309 / KCTC 3954 / HTE831).